Consider the following 454-residue polypeptide: Bifunctional protein GlmU (454 aa).

Positions 1-232 (MTDRTCLSIV…VDNVIGINNR (232 aa)) are pyrophosphorylase. UDP-N-acetyl-alpha-D-glucosamine contacts are provided by residues 11–14 (LAAG), Lys-25, Gln-78, and 83–84 (GT). Residue Asp-108 coordinates Mg(2+). Residues Gly-144, Glu-158, Asn-173, and Asn-230 each contribute to the UDP-N-acetyl-alpha-D-glucosamine site. Residue Asn-230 coordinates Mg(2+). Residues 233–253 (AELAEAETIWQNRKRRELMLS) are linker. The segment at 254 to 454 (GVTLIAPETV…AIKAAKSVSK (201 aa)) is N-acetyltransferase. UDP-N-acetyl-alpha-D-glucosamine is bound by residues Arg-319 and Lys-337. Residue His-349 is the Proton acceptor of the active site. UDP-N-acetyl-alpha-D-glucosamine contacts are provided by Tyr-352 and Asn-363. Acetyl-CoA contacts are provided by residues Ala-366, 372–373 (NY), Ser-391, Ser-409, and Arg-426.

It in the N-terminal section; belongs to the N-acetylglucosamine-1-phosphate uridyltransferase family. In the C-terminal section; belongs to the transferase hexapeptide repeat family. As to quaternary structure, homotrimer. Mg(2+) is required as a cofactor.

Its subcellular location is the cytoplasm. The catalysed reaction is alpha-D-glucosamine 1-phosphate + acetyl-CoA = N-acetyl-alpha-D-glucosamine 1-phosphate + CoA + H(+). The enzyme catalyses N-acetyl-alpha-D-glucosamine 1-phosphate + UTP + H(+) = UDP-N-acetyl-alpha-D-glucosamine + diphosphate. It participates in nucleotide-sugar biosynthesis; UDP-N-acetyl-alpha-D-glucosamine biosynthesis; N-acetyl-alpha-D-glucosamine 1-phosphate from alpha-D-glucosamine 6-phosphate (route II): step 2/2. It functions in the pathway nucleotide-sugar biosynthesis; UDP-N-acetyl-alpha-D-glucosamine biosynthesis; UDP-N-acetyl-alpha-D-glucosamine from N-acetyl-alpha-D-glucosamine 1-phosphate: step 1/1. Its pathway is bacterial outer membrane biogenesis; LPS lipid A biosynthesis. Functionally, catalyzes the last two sequential reactions in the de novo biosynthetic pathway for UDP-N-acetylglucosamine (UDP-GlcNAc). The C-terminal domain catalyzes the transfer of acetyl group from acetyl coenzyme A to glucosamine-1-phosphate (GlcN-1-P) to produce N-acetylglucosamine-1-phosphate (GlcNAc-1-P), which is converted into UDP-GlcNAc by the transfer of uridine 5-monophosphate (from uridine 5-triphosphate), a reaction catalyzed by the N-terminal domain. The chain is Bifunctional protein GlmU from Brucella abortus (strain S19).